Reading from the N-terminus, the 335-residue chain is Probable peroxidase 26 (335 aa).

The N-terminal stretch at 1–18 (MVMIHIFLTVMVVGGVSL) is a signal peptide. Intrachain disulfides connect Cys46–Cys122, Cys79–Cys84, Cys128–Cys331, and Cys205–Cys237. Arg73 is a catalytic residue. Asp78, Val81, Gly83, Asp85, and Ser87 together coordinate Ca(2+). Pro168 is a binding site for substrate. Heme b is bound at residue His198. Ser199 contributes to the Ca(2+) binding site. Asn216 is a glycosylation site (N-linked (GlcNAc...) asparagine). Residues Asp255 and Ser258 each contribute to the Ca(2+) site. Residues Asn259 and Asn273 are each glycosylated (N-linked (GlcNAc...) asparagine).

It belongs to the peroxidase family. Classical plant (class III) peroxidase subfamily. Heme b is required as a cofactor. It depends on Ca(2+) as a cofactor.

It localises to the secreted. It carries out the reaction 2 a phenolic donor + H2O2 = 2 a phenolic radical donor + 2 H2O. In terms of biological role, removal of H(2)O(2), oxidation of toxic reductants, biosynthesis and degradation of lignin, suberization, auxin catabolism, response to environmental stresses such as wounding, pathogen attack and oxidative stress. The enzyme activity has to be proved. This chain is Probable peroxidase 26 (PER26), found in Arabidopsis thaliana (Mouse-ear cress).